The primary structure comprises 329 residues: Apolipoprotein E (329 aa).

An N-terminal signal peptide occupies residues 1 to 18 (MKVLWAALVVALLAGCWA). 8 repeat units span residues 92 to 113 (TLME…EQLG), 114 to 135 (PMAS…ARLR), 136 to 157 (SDME…AMLG), 158 to 179 (QSTE…KRVL), 180 to 201 (RDAE…EGAE), 202 to 223 (RSVS…TRHA), 224 to 245 (KVDA…QQLR), and 246 to 267 (GRLE…EQME). The 8 X 22 AA approximate tandem repeats stretch occupies residues 92–267 (TLMEETMKEI…HLDEVREQME (176 aa)). Residue Met-155 is modified to Methionine sulfoxide. Ser-159 is subject to Phosphoserine. The segment at 170–180 (HMRKLRKRVLR) is LDL and other lipoprotein receptors binding. 174-177 (LRKR) is a heparin binding site. Residues 222-302 (HAKVDALATQ…GWFEPLVEDM (81 aa)) are lipid-binding and lipoprotein association. A heparin-binding site is contributed by 241-248 (GQQLRGRL). The homooligomerization stretch occupies residues 278–329 (NQMRQQAEAFQARLKGWFEPLVEDMQRQWAVLVEKVQAAVGTSPTTPPVETK). The specificity for association with VLDL stretch occupies residues 290–302 (RLKGWFEPLVEDM).

This sequence belongs to the apolipoprotein A1/A4/E family. As to quaternary structure, homotetramer. May interact with ABCA1; functionally associated with ABCA1 in the biogenesis of HDLs. May interact with APP/A4 amyloid-beta peptide; the interaction is extremely stable in vitro but its physiological significance is unclear. May interact with MAPT. May interact with MAP2. In the cerebrospinal fluid, interacts with secreted SORL1. Interacts with PMEL; this allows the loading of PMEL luminal fragment on ILVs to induce fibril nucleation. In terms of processing, APOE exists as multiple glycosylated and sialylated glycoforms within cells and in plasma. The extent of glycosylation and sialylation are tissue and context specific. Glycated in plasma VLDL. Post-translationally, phosphorylated by FAM20C in the extracellular medium.

Its subcellular location is the secreted. The protein resides in the extracellular space. The protein localises to the extracellular matrix. It localises to the extracellular vesicle. It is found in the endosome. Its subcellular location is the multivesicular body. APOE is an apolipoprotein, a protein associating with lipid particles, that mainly functions in lipoprotein-mediated lipid transport between organs via the plasma and interstitial fluids. APOE is a core component of plasma lipoproteins and is involved in their production, conversion and clearance. Apolipoproteins are amphipathic molecules that interact both with lipids of the lipoprotein particle core and the aqueous environment of the plasma. As such, APOE associates with chylomicrons, chylomicron remnants, very low density lipoproteins (VLDL) and intermediate density lipoproteins (IDL) but shows a preferential binding to high-density lipoproteins (HDL). It also binds a wide range of cellular receptors including the LDL receptor/LDLR, the LDL receptor-related proteins LRP1, LRP2 and LRP8 and the very low-density lipoprotein receptor/VLDLR that mediate the cellular uptake of the APOE-containing lipoprotein particles. Finally, APOE also has a heparin-binding activity and binds heparan-sulfate proteoglycans on the surface of cells, a property that supports the capture and the receptor-mediated uptake of APOE-containing lipoproteins by cells. A main function of APOE is to mediate lipoprotein clearance through the uptake of chylomicrons, VLDLs, and HDLs by hepatocytes. APOE is also involved in the biosynthesis by the liver of VLDLs as well as their uptake by peripheral tissues ensuring the delivery of triglycerides and energy storage in muscle, heart and adipose tissues. By participating in the lipoprotein-mediated distribution of lipids among tissues, APOE plays a critical role in plasma and tissues lipid homeostasis. APOE is also involved in two steps of reverse cholesterol transport, the HDLs-mediated transport of cholesterol from peripheral tissues to the liver, and thereby plays an important role in cholesterol homeostasis. First, it is functionally associated with ABCA1 in the biogenesis of HDLs in tissues. Second, it is enriched in circulating HDLs and mediates their uptake by hepatocytes. APOE also plays an important role in lipid transport in the central nervous system, regulating neuron survival and sprouting. This chain is Apolipoprotein E (APOE), found in Eumetopias jubatus (Steller sea lion).